A 126-amino-acid polypeptide reads, in one-letter code: SH2 domain-containing protein 1A (126 aa).

An SH2 domain is found at 6 to 104 (VYHGKISRET…VTPLQYPVEK (99 aa)). Positions 67–92 (ETAPGVHKRFFRKVKNLISAFQKPDQ) are interaction with FYN SH3 domain. Lysine 89 is modified (N6-acetyllysine). The tract at residues 100–126 (YPVEKSSGRGPQAPTGRRDSDICLNAP) is disordered.

In terms of assembly, interacts with CD84, CD244, LY9, SLAMF1 and FYN. Interacts with NTRK1, NTRK2 and NTRK3. T-cells.

The protein localises to the cytoplasm. In terms of biological role, cytoplasmic adapter regulating receptors of the signaling lymphocytic activation molecule (SLAM) family such as SLAMF1, CD244, LY9, CD84, SLAMF6 and SLAMF7. In SLAM signaling seems to cooperate with SH2D1B/EAT-2. Initially it has been proposed that association with SLAMF1 prevents SLAMF1 binding to inhibitory effectors including INPP5D/SHIP1 and PTPN11/SHP-2. However, by simultaneous interactions, recruits FYN which subsequently phosphorylates and activates SLAMF1. Positively regulates CD244/2B4- and CD84-mediated natural killer (NK) cell functions. Can also promote CD48-, SLAMF6 -, LY9-, and SLAMF7-mediated NK cell activation. In the context of NK cell-mediated cytotoxicity enhances conjugate formation with target cells. May also regulate the activity of the neurotrophin receptors NTRK1, NTRK2 and NTRK3. This Mus musculus (Mouse) protein is SH2 domain-containing protein 1A (Sh2d1a).